Here is a 318-residue protein sequence, read N- to C-terminus: RNA polymerase II transcription factor B subunit 3 (318 aa).

The RING-type zinc finger occupies cysteine 13–cysteine 54.

In terms of assembly, one of the nine subunits forming the core-TFIIH basal transcription factor. Also interacts with skp1 and with the mcs2-mcs6 complex.

It localises to the cytoplasm. Its subcellular location is the nucleus. Functionally, acts as a component of the general transcription and DNA repair factor IIH (TFIIH or factor B), which is essential for both basal and activated transcription, and is involved in nucleotide excision repair (NER) of damaged DNA. TFIIH has CTD kinase activity and DNA-dependent ATPase activity, and is essential for polymerase II transcription. This Schizosaccharomyces pombe (strain 972 / ATCC 24843) (Fission yeast) protein is RNA polymerase II transcription factor B subunit 3 (pmh1).